The sequence spans 295 residues: Putative F-box protein At5g44220 (295 aa).

Positions 56–102 (STNSDLLPMDLIKEILKRLPAKTLARFLCVSKLWSSIIRSRDLMKLF) constitute an F-box domain.

The protein is Putative F-box protein At5g44220 of Arabidopsis thaliana (Mouse-ear cress).